The chain runs to 145 residues: Hemoglobin subunit beta-A (145 aa).

The region spanning 1 to 145 (MLTAEEKAAV…VANALAHRYH (145 aa)) is the Globin domain. Residues His-62 and His-91 each contribute to the heme b site.

The protein belongs to the globin family. Heterotetramer of two alpha chains and two beta chains. In terms of tissue distribution, red blood cells.

In terms of biological role, involved in oxygen transport from the lung to the various peripheral tissues. This chain is Hemoglobin subunit beta-A, found in Capra hircus (Goat).